A 396-amino-acid chain; its full sequence is Elongation factor Tu (396 aa).

A tr-type G domain is found at 10–206; sequence KPHVNVGTIG…ALDTYIPTPE (197 aa). The interval 19–26 is G1; it reads GHVDHGKT. 19–26 is a binding site for GTP; sequence GHVDHGKT. Residue Thr-26 coordinates Mg(2+). Residues 60-64 are G2; sequence GITIN. Residues 81-84 are G3; sequence DCPG. Residues 81-85 and 136-139 each bind GTP; these read DCPGH and NKCD. Positions 136–139 are G4; that stretch reads NKCD. The segment at 174–176 is G5; sequence SAK.

It belongs to the TRAFAC class translation factor GTPase superfamily. Classic translation factor GTPase family. EF-Tu/EF-1A subfamily. In terms of assembly, monomer.

The protein localises to the cytoplasm. It carries out the reaction GTP + H2O = GDP + phosphate + H(+). Its function is as follows. GTP hydrolase that promotes the GTP-dependent binding of aminoacyl-tRNA to the A-site of ribosomes during protein biosynthesis. The sequence is that of Elongation factor Tu from Burkholderia cepacia (Pseudomonas cepacia).